Reading from the N-terminus, the 359-residue chain is Guanine nucleotide-binding protein G(o) subunit alpha (359 aa).

The segment at 1 to 26 (MGGCVSATPEEREAKTRSSVIDRQQR) is disordered. A lipid anchor (N-myristoyl glycine) is attached at G2. C4 is lipidated: S-palmitoyl cysteine. Residues 34–359 (NTIKILLLGA…RENLEAANLL (326 aa)) enclose the G-alpha domain. The tract at residues 37–50 (KILLLGAGESGKST) is G1 motif. Residues 42-49 (GAGESGKS), 178-184 (LRSRVQT), 203-207 (DVGGQ), 272-275 (NKAD), and A331 contribute to the GTP site. Residues S49 and T184 each contribute to the Mg(2+) site. The interval 176–184 (DVLRSRVQT) is G2 motif. Residues 199-208 (YRVVDVGGQR) form a G3 motif region. Residues 268–275 (ILFLNKAD) form a G4 motif region. Residues 329–334 (TTATDT) are G5 motif.

It belongs to the G-alpha family. G(i/o/t/z) subfamily. G proteins are composed of 3 units; alpha, beta and gamma. The alpha chain contains the guanine nucleotide binding site.

Functionally, guanine nucleotide-binding proteins (G proteins) are involved as modulators or transducers in various transmembrane signaling systems. The G(o) protein function is not clear. This is Guanine nucleotide-binding protein G(o) subunit alpha from Geodia cydonium (Sponge).